The chain runs to 435 residues: Adenylosuccinate synthetase (435 aa).

GTP is bound by residues 11–17 and 39–41; these read GDEGKGK and GHT. The Proton acceptor role is filled by Asp12. The Mg(2+) site is built by Asp12 and Gly39. IMP contacts are provided by residues 12–15, 37–40, Thr134, Arg148, Asn230, Thr245, and Arg309; these read DEGK and NAGH. His40 (proton donor) is an active-site residue. 305–311 lines the substrate pocket; the sequence is VTTGRKR. GTP-binding positions include Arg311, 337-339, and 419-421; these read KLD and GTG.

It belongs to the adenylosuccinate synthetase family. In terms of assembly, homodimer. It depends on Mg(2+) as a cofactor.

Its subcellular location is the cytoplasm. The enzyme catalyses IMP + L-aspartate + GTP = N(6)-(1,2-dicarboxyethyl)-AMP + GDP + phosphate + 2 H(+). Its pathway is purine metabolism; AMP biosynthesis via de novo pathway; AMP from IMP: step 1/2. In terms of biological role, plays an important role in the de novo pathway and in the salvage pathway of purine nucleotide biosynthesis. Catalyzes the first committed step in the biosynthesis of AMP from IMP. The chain is Adenylosuccinate synthetase from Zygosaccharomyces rouxii (strain ATCC 2623 / CBS 732 / NBRC 1130 / NCYC 568 / NRRL Y-229).